The chain runs to 890 residues: Translation initiation factor IF-2 (890 aa).

Residues 50–304 (LRQGSPEQEE…LQQEFERPTA (255 aa)) are disordered. Basic and acidic residues-rich tracts occupy residues 112 to 125 (KRSD…RKQE), 136 to 147 (RALEQEEAKREE), and 217 to 262 (ALKE…QEAK). Residues 390-559 (GRAPVVTVMG…VLQAELQELK (170 aa)) enclose the tr-type G domain. Positions 399–406 (GHVDHGKT) are G1. 399 to 406 (GHVDHGKT) provides a ligand contact to GTP. A G2 region spans residues 424-428 (GITQH). Residues 445–448 (DTPG) are G3. GTP is bound by residues 445-449 (DTPGH) and 499-502 (NKMD). The interval 499-502 (NKMD) is G4. Residues 535-537 (SAM) form a G5 region.

This sequence belongs to the TRAFAC class translation factor GTPase superfamily. Classic translation factor GTPase family. IF-2 subfamily.

It is found in the cytoplasm. Its function is as follows. One of the essential components for the initiation of protein synthesis. Protects formylmethionyl-tRNA from spontaneous hydrolysis and promotes its binding to the 30S ribosomal subunits. Also involved in the hydrolysis of GTP during the formation of the 70S ribosomal complex. In Halorhodospira halophila (strain DSM 244 / SL1) (Ectothiorhodospira halophila (strain DSM 244 / SL1)), this protein is Translation initiation factor IF-2.